We begin with the raw amino-acid sequence, 407 residues long: MDVISELVKKNGSKILLIVLDGLGGLPVKEGKTELELAKTPNLDKLVKNSATGLHIPVDWGITPGSGPGHLGLFGYDPIKYQIGRGILEALGLGIDVKDTDIAVRGNYATVEYRNGKPIVVDRRAGRIPTEENKRITAKLQEAIKEIDGVQVIIKPGMEHRLAIVFRFPEKLSPGSDAINDTDPQQVGKEPLEPKGENPNAEKVAEVVRKFIQRATEILRNEPKANYILLRGFSQKPDIPTMEERFGVKPCCIAVYPMYKGLASLVGMDVIEFEGSTIQDEIDTLKKVWNEYDYFFVHIKKTDSYGEDGNYEGKVSVIEDFDAHLPQFLELKPDVLAITGDHSTPSILKGHSWHPVPLLIHSPYVLGGTSERFTERECLKGELGIIPAVKITQLLLANALRLKKYGA.

The interval 175–200 (GSDAINDTDPQQVGKEPLEPKGENPN) is disordered.

The protein belongs to the BPG-independent phosphoglycerate mutase family. A-PGAM subfamily.

The enzyme catalyses (2R)-2-phosphoglycerate = (2R)-3-phosphoglycerate. The protein operates within carbohydrate degradation; glycolysis; pyruvate from D-glyceraldehyde 3-phosphate: step 3/5. Catalyzes the interconversion of 2-phosphoglycerate and 3-phosphoglycerate. This is Probable 2,3-bisphosphoglycerate-independent phosphoglycerate mutase from Aquifex aeolicus (strain VF5).